A 402-amino-acid chain; its full sequence is Putative neuropeptide Y receptor 11 (402 aa).

Topologically, residues 1–45 are extracellular; sequence MGSVNESCDNYVEIFNKINYFFRDDQVINGTEYSPKEFGYFITFA. N-linked (GlcNAc...) asparagine glycosylation is found at N5 and N29. A helical membrane pass occupies residues 46-66; it reads YMLIILFGAIGNFLTIIVVIL. Residues 67–85 lie on the Cytoplasmic side of the membrane; sequence NPAMRTTRNFFILNLALSD. A helical membrane pass occupies residues 86–106; the sequence is FFVCIVTAPTTLYTVLYMFWP. Residues 107–122 are Extracellular-facing; it reads FSRTLCKIAGSLQGFN. Residues C112 and C194 are joined by a disulfide bond. The chain crosses the membrane as a helical span at residues 123 to 143; it reads IFLSTFSIASIAVDRYVLIIF. Over 144–152 the chain is Cytoplasmic; that stretch reads PTKRERQQN. A helical membrane pass occupies residues 153–173; sequence LSFCFFIMIWVISLILAVPLL. Residues 174–210 lie on the Extracellular side of the membrane; it reads QASDLTPVFVEPSCDLALYICHEQNEIWEKMIISKGT. The helical transmembrane segment at 211 to 231 threads the bilayer; that stretch reads YTLAVLITQYAFPLFSLVFAY. At 232-272 the chain is on the cytoplasmic side; sequence SRIAHRMKLRFANRNQNVTTNTNTSQRRRSVVERQRRTHLL. A helical membrane pass occupies residues 273 to 293; it reads LVCVVAVFAVAWLPLNVFHIF. The Extracellular portion of the chain corresponds to 294–306; that stretch reads NTFELVNSFSVTT. A helical transmembrane segment spans residues 307-328; sequence FSICHCLAMCSACLNPLIYAFF. Residues 329–402 are Cytoplasmic-facing; it reads NHNFRIEFMH…LSAMEQDEQL (74 aa).

This sequence belongs to the G-protein coupled receptor 1 family.

The protein resides in the cell membrane. Could be a receptor for neuropeptide Y and peptide YY. The sequence is that of Putative neuropeptide Y receptor 11 (npr-11) from Caenorhabditis elegans.